A 379-amino-acid polypeptide reads, in one-letter code: Glutamate 5-kinase (379 aa).

Lys-19 provides a ligand contact to ATP. Substrate-binding residues include Ser-59, Asp-146, and Asn-158. Residue 178–179 (TD) participates in ATP binding. The 79-residue stretch at 285–363 (RGAVTVDAGA…SEFERLLGYV (79 aa)) folds into the PUA domain.

It belongs to the glutamate 5-kinase family.

The protein localises to the cytoplasm. The catalysed reaction is L-glutamate + ATP = L-glutamyl 5-phosphate + ADP. It participates in amino-acid biosynthesis; L-proline biosynthesis; L-glutamate 5-semialdehyde from L-glutamate: step 1/2. Its function is as follows. Catalyzes the transfer of a phosphate group to glutamate to form L-glutamate 5-phosphate. The protein is Glutamate 5-kinase of Variovorax paradoxus (strain S110).